The sequence spans 228 residues: Large ribosomal subunit protein bL25 (228 aa).

The segment at 198 to 228 (AAIAEAQSAEAAEEKAEAEAEATNEKNDTEE) is disordered. The span at 209–228 (AEEKAEAEAEATNEKNDTEE) shows a compositional bias: basic and acidic residues.

This sequence belongs to the bacterial ribosomal protein bL25 family. CTC subfamily. As to quaternary structure, part of the 50S ribosomal subunit; part of the 5S rRNA/L5/L18/L25 subcomplex. Contacts the 5S rRNA. Binds to the 5S rRNA independently of L5 and L18.

In terms of biological role, this is one of the proteins that binds to the 5S RNA in the ribosome where it forms part of the central protuberance. The chain is Large ribosomal subunit protein bL25 from Methylorubrum populi (strain ATCC BAA-705 / NCIMB 13946 / BJ001) (Methylobacterium populi).